Reading from the N-terminus, the 433-residue chain is Serine hydroxymethyltransferase (433 aa).

(6S)-5,6,7,8-tetrahydrofolate-binding positions include Leu-132 and 136-138 (GHL). Lys-241 is modified (N6-(pyridoxal phosphate)lysine).

Belongs to the SHMT family. In terms of assembly, homodimer. Pyridoxal 5'-phosphate serves as cofactor.

It is found in the cytoplasm. It catalyses the reaction (6R)-5,10-methylene-5,6,7,8-tetrahydrofolate + glycine + H2O = (6S)-5,6,7,8-tetrahydrofolate + L-serine. It participates in one-carbon metabolism; tetrahydrofolate interconversion. It functions in the pathway amino-acid biosynthesis; glycine biosynthesis; glycine from L-serine: step 1/1. Catalyzes the reversible interconversion of serine and glycine with tetrahydrofolate (THF) serving as the one-carbon carrier. This reaction serves as the major source of one-carbon groups required for the biosynthesis of purines, thymidylate, methionine, and other important biomolecules. Also exhibits THF-independent aldolase activity toward beta-hydroxyamino acids, producing glycine and aldehydes, via a retro-aldol mechanism. The chain is Serine hydroxymethyltransferase from Rhodopseudomonas palustris (strain HaA2).